A 62-amino-acid polypeptide reads, in one-letter code: Small acidic protein 1 (62 aa).

Interacts with the COP9 signalosome. In terms of tissue distribution, expressed in roots, flowers, siliques, stems, leaves and seeds. In flowers, detected in petals, anthers and pistils.

Its function is as follows. Mediates responses to the synthetic auxin 2,4-dichlorophenoxyacetic acid (2,4-D). Not involved in the response to indole-3-acetic acid (IAA). Interacts with RUB modification-related components and may regulate the cullin-ring ubiquitin E3 ligase complex (CRL) activity. This Arabidopsis thaliana (Mouse-ear cress) protein is Small acidic protein 1 (SMAP1).